We begin with the raw amino-acid sequence, 613 residues long: Proton myo-inositol cotransporter hmit-1.2 (613 aa).

Over 1–21 the chain is Cytoplasmic; that stretch reads MVAVEFKVSESGRPRPEKNPK. Residues 22–42 traverse the membrane as a helical segment; it reads LGFFVYLLGSAAIIGGFLFGY. Residues 43 to 69 lie on the Extracellular side of the membrane; that stretch reads DTSVVSAAMLYVPEAPGLKPMGTVWKE. A helical transmembrane segment spans residues 70–90; the sequence is VIVSITPGMAAVGAWFSGAGS. Residues 91–96 lie on the Cytoplasmic side of the membrane; the sequence is DRYGRK. The helical transmembrane segment at 97–117 threads the bilayer; it reads PIIIGSTLIFVCGAVICAVAW. At 118-119 the chain is on the extracellular side; sequence TK. The chain crosses the membrane as a helical span at residues 120–140; sequence IVMLIGRIFLGVGIGFASMVV. Topologically, residues 141–157 are cytoplasmic; sequence PVYLGEASPTHVRGTLV. The chain crosses the membrane as a helical span at residues 158 to 178; that stretch reads SAFAMMISFGQVVANIMGGVF. The Extracellular segment spans residues 179–189; it reads SYWEPYTIGWR. The helical transmembrane segment at 190-210 threads the bilayer; it reads LMFAFAGIPALIQFVCFIFLP. Residues 211 to 279 lie on the Cytoplasmic side of the membrane; that stretch reads ETPRWLYENG…RILKTPHVLK (69 aa). A helical transmembrane segment spans residues 280–300; sequence ACFIGSMLQAFQQLAGINTIL. Residues 301–317 are Extracellular-facing; that stretch reads YYTADIIRSAGIENYHT. The chain crosses the membrane as a helical span at residues 318–338; sequence IIWISVILSICNLIGPFAPMF. The Cytoplasmic segment spans residues 339–347; the sequence is FIEKLGRRK. The helical transmembrane segment at 348–368 threads the bilayer; sequence LFLFSCAGVVVSLVLIGVSFL. Over 369 to 472 the chain is Extracellular; it reads LVGNDSAPNF…QKHHCTTSYT (104 aa). 3 N-linked (GlcNAc...) asparagine glycosylation sites follow: asparagine 372, asparagine 451, and asparagine 456. A helical membrane pass occupies residues 473-493; that stretch reads ILPIVMMGVYLLTFSCGFTSL. Over 494–515 the chain is Cytoplasmic; sequence PWVLNSEFYPMWARSTCVSIST. Residues 516 to 536 form a helical membrane-spanning segment; it reads LSNWVFNLIIALTYLSLTHAI. At 537–539 the chain is on the extracellular side; it reads TKY. The helical transmembrane segment at 540 to 560 threads the bilayer; it reads GAFWLYAIFTIIAFIFIYFLV. The Cytoplasmic segment spans residues 561 to 613; that stretch reads PETTGYSIDEVEMLFMNKRQRNIAMQARQAKLDAASDKDKNSSTSLSTETITM. A disordered region spans residues 594–613; it reads AASDKDKNSSTSLSTETITM. The segment covering 602–613 has biased composition (polar residues); the sequence is SSTSLSTETITM.

Belongs to the major facilitator superfamily. Sugar transporter (TC 2.A.1.1) family. As to expression, expressed in the excretory canal cell and in pairs of amphid and sheath glia.

It is found in the cell membrane. The protein localises to the perikaryon. The enzyme catalyses myo-inositol(out) + H(+)(out) = myo-inositol(in) + H(+)(in). In terms of biological role, h(+)-myo-inositol cotransporter. Probably by promoting the transport of myo-inositol regulates intracellular osmosis in response to hyperosmotic stress. This Caenorhabditis elegans protein is Proton myo-inositol cotransporter hmit-1.2.